The chain runs to 231 residues: Orotate phosphoribosyltransferase (231 aa).

Residues K27, 79–80, R106, K107, K110, H112, and 133–141 each bind 5-phospho-alpha-D-ribose 1-diphosphate; these read YK and DDVMTAGTA. Residues T137 and R166 each coordinate orotate.

The protein belongs to the purine/pyrimidine phosphoribosyltransferase family. PyrE subfamily. In terms of assembly, homodimer. Requires Mg(2+) as cofactor.

It carries out the reaction orotidine 5'-phosphate + diphosphate = orotate + 5-phospho-alpha-D-ribose 1-diphosphate. It participates in pyrimidine metabolism; UMP biosynthesis via de novo pathway; UMP from orotate: step 1/2. Functionally, catalyzes the transfer of a ribosyl phosphate group from 5-phosphoribose 1-diphosphate to orotate, leading to the formation of orotidine monophosphate (OMP). This is Orotate phosphoribosyltransferase from Bifidobacterium animalis subsp. lactis (strain AD011).